The chain runs to 342 residues: Ferredoxin--NADP reductase (342 aa).

Positions 17, 36, 44, 49, 89, 124, 289, and 330 each coordinate FAD.

This sequence belongs to the ferredoxin--NADP reductase type 2 family. Homodimer. It depends on FAD as a cofactor.

It catalyses the reaction 2 reduced [2Fe-2S]-[ferredoxin] + NADP(+) + H(+) = 2 oxidized [2Fe-2S]-[ferredoxin] + NADPH. The protein is Ferredoxin--NADP reductase of Nitrobacter winogradskyi (strain ATCC 25391 / DSM 10237 / CIP 104748 / NCIMB 11846 / Nb-255).